We begin with the raw amino-acid sequence, 385 residues long: S-adenosylmethionine synthase (385 aa).

His15 serves as a coordination point for ATP. A Mg(2+)-binding site is contributed by Asp17. Glu43 is a binding site for K(+). 2 residues coordinate L-methionine: Glu56 and Gln99. The segment at 99–109 (QSPDINKGINN) is flexible loop. ATP contacts are provided by residues 164–166 (DAK), 230–231 (RF), Asp239, 245–246 (RK), Ala262, and Lys266. Asp239 provides a ligand contact to L-methionine. Lys270 lines the L-methionine pocket.

This sequence belongs to the AdoMet synthase family. In terms of assembly, homotetramer; dimer of dimers. The cofactor is Mg(2+). K(+) is required as a cofactor.

The protein resides in the cytoplasm. The enzyme catalyses L-methionine + ATP + H2O = S-adenosyl-L-methionine + phosphate + diphosphate. Its pathway is amino-acid biosynthesis; S-adenosyl-L-methionine biosynthesis; S-adenosyl-L-methionine from L-methionine: step 1/1. In terms of biological role, catalyzes the formation of S-adenosylmethionine (AdoMet) from methionine and ATP. The overall synthetic reaction is composed of two sequential steps, AdoMet formation and the subsequent tripolyphosphate hydrolysis which occurs prior to release of AdoMet from the enzyme. The polypeptide is S-adenosylmethionine synthase (Baumannia cicadellinicola subsp. Homalodisca coagulata).